The following is a 436-amino-acid chain: UPF0761 membrane protein Bxeno_A3061 (436 aa).

Transmembrane regions (helical) follow at residues 42–62, 96–116, 136–156, 180–200, 210–230, and 241–261; these read LVPL…FASF, GLTT…MMTV, ILVY…SLSI, ALAG…YVYL, AVIG…GFGY, and VYGA…CWFI.

It belongs to the UPF0761 family.

The protein localises to the cell inner membrane. The polypeptide is UPF0761 membrane protein Bxeno_A3061 (Paraburkholderia xenovorans (strain LB400)).